We begin with the raw amino-acid sequence, 317 residues long: ADIPOR-like receptor IZH1 (317 aa).

At 1-80 the chain is on the lumenal side; sequence MSEERGMKEQ…FNNESINIYT (80 aa). Residue N73 is glycosylated (N-linked (GlcNAc...) asparagine). The helical transmembrane segment at 81–101 threads the bilayer; sequence HLIPGVAYLVLFLIFADLVLA. Topologically, residues 102-113 are cytoplasmic; the sequence is QLLPGLDAGEHR. Residues 114–136 traverse the membrane as a helical segment; it reads MLRFYLLGAFTCLACSSCFHCLK. Residues 137 to 148 lie on the Lumenal side of the membrane; that stretch reads QHSEPHSRLWSK. Residues 149–169 traverse the membrane as a helical segment; sequence VDYLGILAQITCSTISLLYYG. Residues 170–175 lie on the Cytoplasmic side of the membrane; that stretch reads YHSYPS. The chain crosses the membrane as a helical span at residues 176-196; it reads HFVFFSTLTVALCSACAVLVL. N197 carries N-linked (GlcNAc...) asparagine glycosylation. Topologically, residues 197–210 are lumenal; that stretch reads NDSFNTVAFRPLRA. Residues 211-231 form a helical membrane-spanning segment; sequence FLFMAFGLSGVIPVLAGSYQF. The Cytoplasmic portion of the chain corresponds to 232-243; it reads GFAEWAARIQLK. Residues 244 to 264 traverse the membrane as a helical segment; it reads YVLYEAVFYITGALVYGFRIP. The Lumenal segment spans residues 265 to 283; it reads ERFAPGKFDMVGHSHQIFH. Residues 284–304 traverse the membrane as a helical segment; that stretch reads LLVVLGTLCHFRAVTGSYIFI. Residues 305–317 lie on the Cytoplasmic side of the membrane; the sequence is CTGKHYSSLLMFI.

It belongs to the ADIPOR family.

It is found in the endoplasmic reticulum membrane. Its function is as follows. ADIPOR-like receptor involved in zinc metabolism either by altering membrane sterol content or by directly altering cellular zinc levels. The polypeptide is ADIPOR-like receptor IZH1 (IZH1) (Eremothecium gossypii (strain ATCC 10895 / CBS 109.51 / FGSC 9923 / NRRL Y-1056) (Yeast)).